The chain runs to 62 residues: Large ribosomal subunit protein bL33 (62 aa).

This sequence belongs to the bacterial ribosomal protein bL33 family.

This chain is Large ribosomal subunit protein bL33, found in Bacteroides fragilis (strain ATCC 25285 / DSM 2151 / CCUG 4856 / JCM 11019 / LMG 10263 / NCTC 9343 / Onslow / VPI 2553 / EN-2).